Here is a 344-residue protein sequence, read N- to C-terminus: Adenosine kinase 1 (344 aa).

Asp299 is an active-site residue.

This sequence belongs to the carbohydrate kinase PfkB family. Interacts with the begomovirus AL2 protein and the curtovirus L2 protein. Mg(2+) serves as cofactor. As to expression, widely expressed.

The catalysed reaction is adenosine + ATP = AMP + ADP + H(+). It functions in the pathway purine metabolism; AMP biosynthesis via salvage pathway; AMP from adenosine: step 1/1. With respect to regulation, inactivated by the begomovirus AL2 protein or the curtovirus L2 protein. ATP dependent phosphorylation of adenosine and other related nucleoside analogs to monophosphate derivatives. Essential to sustain methyl recycling. The chain is Adenosine kinase 1 from Arabidopsis thaliana (Mouse-ear cress).